Reading from the N-terminus, the 399-residue chain is Tryptophan synthase beta chain (399 aa).

Lys90 carries the N6-(pyridoxal phosphate)lysine modification.

Belongs to the TrpB family. As to quaternary structure, tetramer of two alpha and two beta chains. Pyridoxal 5'-phosphate is required as a cofactor.

The catalysed reaction is (1S,2R)-1-C-(indol-3-yl)glycerol 3-phosphate + L-serine = D-glyceraldehyde 3-phosphate + L-tryptophan + H2O. Its pathway is amino-acid biosynthesis; L-tryptophan biosynthesis; L-tryptophan from chorismate: step 5/5. Functionally, the beta subunit is responsible for the synthesis of L-tryptophan from indole and L-serine. The chain is Tryptophan synthase beta chain from Bacillus pumilus (strain SAFR-032).